We begin with the raw amino-acid sequence, 304 residues long: UTP--glucose-1-phosphate uridylyltransferase 1 (304 aa).

The protein belongs to the UDPGP type 2 family.

The catalysed reaction is alpha-D-glucose 1-phosphate + UTP + H(+) = UDP-alpha-D-glucose + diphosphate. It functions in the pathway carbohydrate metabolism; nucleotide-sugar metabolism. This chain is UTP--glucose-1-phosphate uridylyltransferase 1 (hasC1), found in Streptococcus pyogenes serotype M3 (strain ATCC BAA-595 / MGAS315).